We begin with the raw amino-acid sequence, 189 residues long: Chitin synthase 2 (189 aa).

It belongs to the chitin synthase family. Class II subfamily.

Its subcellular location is the cell membrane. The catalysed reaction is [(1-&gt;4)-N-acetyl-beta-D-glucosaminyl](n) + UDP-N-acetyl-alpha-D-glucosamine = [(1-&gt;4)-N-acetyl-beta-D-glucosaminyl](n+1) + UDP + H(+). Polymerizes chitin, a structural polymer of the cell wall and septum, by transferring the sugar moiety of UDP-GlcNAc to the non-reducing end of the growing chitin polymer. The protein is Chitin synthase 2 (CHS2) of Ajellomyces dermatitidis (Blastomyces dermatitidis).